Reading from the N-terminus, the 909-residue chain is ABC transporter A family member 10 (909 aa).

The next 7 helical transmembrane spans lie at 35 to 55, 320 to 340, 374 to 394, 406 to 426, 433 to 453, 465 to 485, and 507 to 527; these read VLVP…LDVV, IASM…FPVI, FLTL…AIGL, FIFY…ASSI, ATVV…FLFG, GILA…YEFA, and LFYL…SIDL. Ser-555 bears the Phosphoserine mark. The region spanning 587-824 is the ABC transporter domain; the sequence is IVCDNLKKVY…YGGSYVFTMT (238 aa). Residue 625-632 coordinates ATP; sequence GPNGAGKT.

This sequence belongs to the ABC transporter superfamily. ABCA family. CPR flippase (TC 3.A.1.211) subfamily.

It localises to the membrane. This is ABC transporter A family member 10 (ABCA10) from Arabidopsis thaliana (Mouse-ear cress).